The following is a 195-amino-acid chain: Nicotinamide riboside kinase 1 (195 aa).

Residue 10–18 (GVTNGGKTT) coordinates ATP. T17 and D36 together coordinate Mg(2+). The active-site Proton acceptor is D36. Substrate-binding positions include 36 to 39 (DDFF) and 55 to 56 (YD). R128 is a binding site for ATP. Substrate is bound by residues R129 and 134–135 (YE). ATP is bound by residues 132–134 (RVY) and 172–174 (RSE).

Belongs to the uridine kinase family. NRK subfamily. Monomer.

It carries out the reaction beta-nicotinamide D-riboside + ATP = beta-nicotinamide D-ribonucleotide + ADP + H(+). The enzyme catalyses beta-D-ribosylnicotinate + ATP = nicotinate beta-D-ribonucleotide + ADP + H(+). It functions in the pathway cofactor biosynthesis; NAD(+) biosynthesis. In terms of biological role, catalyzes the phosphorylation of nicotinamide riboside (NR) and nicotinic acid riboside (NaR) to form nicotinamide mononucleotide (NMN) and nicotinic acid mononucleotide (NaMN). The protein is Nicotinamide riboside kinase 1 (Nmrk1) of Mus musculus (Mouse).